Reading from the N-terminus, the 538-residue chain is CTP synthase (538 aa).

The amidoligase domain stretch occupies residues 1–266; sequence MKTKFIFVTG…DDQVVDKLNI (266 aa). CTP is bound at residue serine 14. A UTP-binding site is contributed by serine 14. ATP contacts are provided by residues 15–20 and aspartate 72; that span reads SIGKGL. Residues aspartate 72 and glutamate 140 each contribute to the Mg(2+) site. Residues 147 to 149, 187 to 192, and lysine 223 contribute to the CTP site; these read DIE and KTKPTQ. UTP-binding positions include 187-192 and lysine 223; that span reads KTKPTQ. Positions 292–534 constitute a Glutamine amidotransferase type-1 domain; sequence HIAIVGKYVN…IAAALEHRGK (243 aa). Glycine 354 serves as a coordination point for L-glutamine. Cysteine 381 (nucleophile; for glutamine hydrolysis) is an active-site residue. L-glutamine-binding positions include 382-385, glutamate 405, and arginine 462; that span reads LGMQ. Active-site residues include histidine 507 and glutamate 509.

This sequence belongs to the CTP synthase family. As to quaternary structure, homotetramer.

The catalysed reaction is UTP + L-glutamine + ATP + H2O = CTP + L-glutamate + ADP + phosphate + 2 H(+). The enzyme catalyses L-glutamine + H2O = L-glutamate + NH4(+). It catalyses the reaction UTP + NH4(+) + ATP = CTP + ADP + phosphate + 2 H(+). Its pathway is pyrimidine metabolism; CTP biosynthesis via de novo pathway; CTP from UDP: step 2/2. Allosterically activated by GTP, when glutamine is the substrate; GTP has no effect on the reaction when ammonia is the substrate. The allosteric effector GTP functions by stabilizing the protein conformation that binds the tetrahedral intermediate(s) formed during glutamine hydrolysis. Inhibited by the product CTP, via allosteric rather than competitive inhibition. Its function is as follows. Catalyzes the ATP-dependent amination of UTP to CTP with either L-glutamine or ammonia as the source of nitrogen. Regulates intracellular CTP levels through interactions with the four ribonucleotide triphosphates. This Geobacter metallireducens (strain ATCC 53774 / DSM 7210 / GS-15) protein is CTP synthase.